A 519-amino-acid chain; its full sequence is Major facilitator superfamily domain-containing protein 8 (519 aa).

A disordered region spans residues 1 to 25; it reads MANLGSEAEREPLLGPGSPGSREWS. Residues 1–41 lie on the Cytoplasmic side of the membrane; the sequence is MANLGSEAEREPLLGPGSPGSREWSEIETQEHYKSRWKSVR. A Dileucine internalization motif motif is present at residues 13 to 14; it reads LL. A helical transmembrane segment spans residues 42 to 62; sequence ILYLTMFLSSVGFSIVIMSIW. Over 63–75 the chain is Extracellular; it reads PYLQKIDQTADAS. A helical transmembrane segment spans residues 76 to 96; that stretch reads FLGWVIASYSLGQMVASPLFG. Over 97-106 the chain is Cytoplasmic; the sequence is LWSNYRPRKE. Residues 107–127 form a helical membrane-spanning segment; sequence PLIVSISISVAANCLYAYVHV. At 128–140 the chain is on the extracellular side; the sequence is PAAHNKYYMLIAR. The chain crosses the membrane as a helical span at residues 141 to 161; it reads GLVGFGAGNVAVVRSYIAGAT. Residues 162-174 are Cytoplasmic-facing; it reads SLQERTNAMANTS. Residues 175 to 195 traverse the membrane as a helical segment; it reads TCQALGFILGPVFQTCFALIG. At 196 to 212 the chain is on the extracellular side; sequence EKGVTWDIIKLQVNMYT. A helical membrane pass occupies residues 213–233; that stretch reads APVLLAAFLGILNIILILFIL. Over 234–267 the chain is Cytoplasmic; the sequence is REHRVDDLGRQCKSVNFQEENTDEPQIPEGSIDQ. The helical transmembrane segment at 268–288 threads the bilayer; the sequence is VAVVATNIVFFVVLFIFAVYE. Over 289–310 the chain is Extracellular; it reads TILTPLTLDMYAWTQEQAVLYD. A helical membrane pass occupies residues 311–331; it reads GILLVAFGVEAVLVFMGVKLL. At 332–338 the chain is on the cytoplasmic side; sequence SKKIGER. The helical transmembrane segment at 339–359 threads the bilayer; that stretch reads AILLGGFVVVWVGFFILLPWG. Residues 360–416 are Extracellular-facing; the sequence is NQFPKIQWEDLHNSSTPNTTFGEIIIGLWNSSREDHSEQPTGCPIEQTWCLYTPVIH. 2 N-linked (GlcNAc...) asparagine glycosylation sites follow: N372 and N377. A helical membrane pass occupies residues 417–439; it reads LAQFLTAAVLIGTGYPACSVMSY. Over 440 to 452 the chain is Cytoplasmic; sequence TLYSKVLGPKPQG. A helical membrane pass occupies residues 453-473; that stretch reads IYMGWLTTSGSAARILGPVFI. At 474 to 483 the chain is on the extracellular side; it reads SHVYTYLGPR. A helical transmembrane segment spans residues 484–504; the sequence is WAFSLVCGIVVLTILLIGAVY. The Cytoplasmic segment spans residues 505–519; that stretch reads KRLVAFSVRYMRIQE.

The protein belongs to the major facilitator superfamily.

It localises to the endosome membrane. The protein resides in the lysosome membrane. It carries out the reaction chloride(in) = chloride(out). It catalyses the reaction iodide(out) = iodide(in). The catalysed reaction is fluoride(in) = fluoride(out). Its function is as follows. Outward-rectifying chloride channel involved in endolysosomal chloride homeostasis, membrane fusion and function. Conducts chloride currents up to hundreds of picoamperes. Regulates lysosomal calcium content by reducing the lysosomal membrane potential, thereby activating TRPML1 channel and further release of lysosomal calcium ions. Regulates the pH in endolysosomal compartments and may contribute to progressive acidification from endosome to lysosome. Permeable to other halides such as iodide and fluoride ions. This Mus musculus (Mouse) protein is Major facilitator superfamily domain-containing protein 8.